A 68-amino-acid chain; its full sequence is Intracellular calcium channel modulator CCP-Ts (68 aa).

An N-terminal signal peptide occupies residues 1–23 (MNPKLLIVIGLLLATGVCSFAKA). Cystine bridges form between C33/C47, C40/C53, and C46/C62.

This sequence belongs to the scorpion calcin-like family. Expressed by the venom gland. In intravenously injected mice, the labeled toxin has preference for heart, liver and lungs.

The protein resides in the secreted. It is found in the nucleus. Functionally, cell penetrating peptide (CPP) that increases intracellular calcium release through the activation of nuclear inositol 1,4,5-trisphosphate receptors (ITPR) of cardiomyocytes, thereby causing an increase in the contraction frequency of these cells. In vivo, this toxin is not lethal to mice, hovewer anti-CPP serum reduces venom lethality, suggesting that this toxin is lethal when it acts in synergy with other venom components. The protein is Intracellular calcium channel modulator CCP-Ts of Tityus serrulatus (Brazilian scorpion).